Reading from the N-terminus, the 289-residue chain is Glycine--tRNA ligase alpha subunit (289 aa).

Belongs to the class-II aminoacyl-tRNA synthetase family. Tetramer of two alpha and two beta subunits.

Its subcellular location is the cytoplasm. It catalyses the reaction tRNA(Gly) + glycine + ATP = glycyl-tRNA(Gly) + AMP + diphosphate. The sequence is that of Glycine--tRNA ligase alpha subunit from Rickettsia akari (strain Hartford).